A 125-amino-acid polypeptide reads, in one-letter code: Small ribosomal subunit protein uS13 (125 aa).

The disordered stretch occupies residues 93–125 (RKGLPVRGQRTKTNARTRKGPKRTVAGKKKAGR).

This sequence belongs to the universal ribosomal protein uS13 family. Part of the 30S ribosomal subunit. Forms a loose heterodimer with protein S19. Forms two bridges to the 50S subunit in the 70S ribosome.

Functionally, located at the top of the head of the 30S subunit, it contacts several helices of the 16S rRNA. In the 70S ribosome it contacts the 23S rRNA (bridge B1a) and protein L5 of the 50S subunit (bridge B1b), connecting the 2 subunits; these bridges are implicated in subunit movement. Contacts the tRNAs in the A and P-sites. This Paenarthrobacter aurescens (strain TC1) protein is Small ribosomal subunit protein uS13.